A 332-amino-acid chain; its full sequence is MAKIYHDLEVSLEVLSDKVITIIGYGSQGRAHALNLKDSGMKVIVAVRPNGESWKRALEEGMTVEKIEDAVQKSDIIMFLIPDTEQPAIYKEKVLPYLRPNQALGFAHGFNIHFSQIVPPPFVDVFMVAPKGPGPLVRDLYVEGKGVPALFAVYQDYTQKCRDIALAYAKGIGATRAGVLETTFKEETETDLFGEQVVLCGGVTALIKAGFETLVEAGYQPEVAYYECLHEMKLIVDLINQGGISFMRKAISDTAKYGDVTRGPRIVNEETKKEMKKILNEIQNGQFAKEWILENQVGRPVFNALLKKDEDHLIEKVGKVIREMMPWLKPKK.

Residues 2 to 182 (AKIYHDLEVS…GATRAGVLET (181 aa)) form the KARI N-terminal Rossmann domain. NADP(+) is bound by residues 25–28 (YGSQ), R48, S53, and 83–86 (DTEQ). H108 is a catalytic residue. G134 contacts NADP(+). The region spanning 183-328 (TFKEETETDL…KVIREMMPWL (146 aa)) is the KARI C-terminal knotted domain. 4 residues coordinate Mg(2+): D191, E195, E227, and E231. Substrate is bound at residue S252.

It belongs to the ketol-acid reductoisomerase family. The cofactor is Mg(2+).

It carries out the reaction (2R)-2,3-dihydroxy-3-methylbutanoate + NADP(+) = (2S)-2-acetolactate + NADPH + H(+). The enzyme catalyses (2R,3R)-2,3-dihydroxy-3-methylpentanoate + NADP(+) = (S)-2-ethyl-2-hydroxy-3-oxobutanoate + NADPH + H(+). It participates in amino-acid biosynthesis; L-isoleucine biosynthesis; L-isoleucine from 2-oxobutanoate: step 2/4. Its pathway is amino-acid biosynthesis; L-valine biosynthesis; L-valine from pyruvate: step 2/4. In terms of biological role, involved in the biosynthesis of branched-chain amino acids (BCAA). Catalyzes an alkyl-migration followed by a ketol-acid reduction of (S)-2-acetolactate (S2AL) to yield (R)-2,3-dihydroxy-isovalerate. In the isomerase reaction, S2AL is rearranged via a Mg-dependent methyl migration to produce 3-hydroxy-3-methyl-2-ketobutyrate (HMKB). In the reductase reaction, this 2-ketoacid undergoes a metal-dependent reduction by NADPH to yield (R)-2,3-dihydroxy-isovalerate. This chain is Ketol-acid reductoisomerase (NADP(+)), found in Dictyoglomus thermophilum (strain ATCC 35947 / DSM 3960 / H-6-12).